A 437-amino-acid polypeptide reads, in one-letter code: Integrase (437 aa).

The Core-binding (CB) domain maps to W73 to Y158. The 250-residue stretch at E179–R428 folds into the Tyr recombinase domain. Active-site residues include R214, K245, H379, R382, and W405. Y414 (O-(3'-phospho-DNA)-tyrosine intermediate) is an active-site residue.

It belongs to the 'phage' integrase family.

Functionally, is a recombinase (or integrase), catalyzing the cutting and rejoining of the recombining DNA molecules. In Saccharopolyspora erythraea (Streptomyces erythraeus), this protein is Integrase (int).